The following is a 284-amino-acid chain: Pantothenate synthetase (284 aa).

Met-30–His-37 lines the ATP pocket. The active-site Proton donor is the His-37. Residue Gln-61 participates in (R)-pantoate binding. Residue Gln-61 coordinates beta-alanine. Gly-147–Asp-150 contributes to the ATP binding site. Gln-153 provides a ligand contact to (R)-pantoate. Residues Val-176 and Lys-184 to Arg-187 each bind ATP.

It belongs to the pantothenate synthetase family. Homodimer.

It localises to the cytoplasm. The enzyme catalyses (R)-pantoate + beta-alanine + ATP = (R)-pantothenate + AMP + diphosphate + H(+). It functions in the pathway cofactor biosynthesis; (R)-pantothenate biosynthesis; (R)-pantothenate from (R)-pantoate and beta-alanine: step 1/1. Catalyzes the condensation of pantoate with beta-alanine in an ATP-dependent reaction via a pantoyl-adenylate intermediate. The protein is Pantothenate synthetase of Chloroherpeton thalassium (strain ATCC 35110 / GB-78).